Reading from the N-terminus, the 170-residue chain is Sec-independent protein translocase protein TatB (170 aa).

The chain crosses the membrane as a helical span at residues 1-21 (MIDFGFDKIALIGAVALIVIG). The interval 69 to 170 (AARNVEQSVS…VARFRPPRPL (102 aa)) is disordered. Residues 73–93 (VEQSVSSEVNRTSSEMNQAWE) are compositionally biased toward polar residues. Basic residues predominate over residues 128 to 137 (HPRKNWRLKR).

This sequence belongs to the TatB family. In terms of assembly, the Tat system comprises two distinct complexes: a TatABC complex, containing multiple copies of TatA, TatB and TatC subunits, and a separate TatA complex, containing only TatA subunits. Substrates initially bind to the TatABC complex, which probably triggers association of the separate TatA complex to form the active translocon.

The protein localises to the cell inner membrane. Its function is as follows. Part of the twin-arginine translocation (Tat) system that transports large folded proteins containing a characteristic twin-arginine motif in their signal peptide across membranes. Together with TatC, TatB is part of a receptor directly interacting with Tat signal peptides. TatB may form an oligomeric binding site that transiently accommodates folded Tat precursor proteins before their translocation. This chain is Sec-independent protein translocase protein TatB, found in Methylibium petroleiphilum (strain ATCC BAA-1232 / LMG 22953 / PM1).